Reading from the N-terminus, the 296-residue chain is 4-hydroxybenzoate octaprenyltransferase (296 aa).

Helical transmembrane passes span 28-48 (PIGI…AGNG), 52-72 (LANV…GCCI), 102-122 (ALAL…CTNS), 145-167 (TYYP…FTAA), 174-196 (SAWL…YAMV), 219-239 (NIIL…GSRF), 241-261 (LGGW…WEYW), and 275-295 (FLHN…DYAF).

It belongs to the UbiA prenyltransferase family. Mg(2+) is required as a cofactor.

It localises to the cell inner membrane. It carries out the reaction all-trans-octaprenyl diphosphate + 4-hydroxybenzoate = 4-hydroxy-3-(all-trans-octaprenyl)benzoate + diphosphate. It functions in the pathway cofactor biosynthesis; ubiquinone biosynthesis. Its function is as follows. Catalyzes the prenylation of para-hydroxybenzoate (PHB) with an all-trans polyprenyl group. Mediates the second step in the final reaction sequence of ubiquinone-8 (UQ-8) biosynthesis, which is the condensation of the polyisoprenoid side chain with PHB, generating the first membrane-bound Q intermediate 3-octaprenyl-4-hydroxybenzoate. The chain is 4-hydroxybenzoate octaprenyltransferase from Pseudomonas putida (strain GB-1).